The following is a 253-amino-acid chain: Ribosomal RNA small subunit methyltransferase G (253 aa).

Residues Gly-84, Phe-89, 135–136 (AE), and Arg-154 each bind S-adenosyl-L-methionine. The tract at residues 228–253 (TPAKYPRREGVPTHQPLFWKAKEQSR) is disordered.

Belongs to the methyltransferase superfamily. RNA methyltransferase RsmG family.

The protein localises to the cytoplasm. Its function is as follows. Specifically methylates the N7 position of a guanine in 16S rRNA. In Deinococcus radiodurans (strain ATCC 13939 / DSM 20539 / JCM 16871 / CCUG 27074 / LMG 4051 / NBRC 15346 / NCIMB 9279 / VKM B-1422 / R1), this protein is Ribosomal RNA small subunit methyltransferase G.